Here is a 492-residue protein sequence, read N- to C-terminus: Protein nucleotidyltransferase YdiU (492 aa).

Residues Gly88, Gly90, Arg91, Lys111, Asp123, Gly124, Arg174, and Arg181 each coordinate ATP. Residue Asp250 is the Proton acceptor of the active site. Mg(2+) is bound by residues Asn251 and Asp260. Asp260 serves as a coordination point for ATP.

The protein belongs to the SELO family. It depends on Mg(2+) as a cofactor. The cofactor is Mn(2+).

It catalyses the reaction L-seryl-[protein] + ATP = 3-O-(5'-adenylyl)-L-seryl-[protein] + diphosphate. The catalysed reaction is L-threonyl-[protein] + ATP = 3-O-(5'-adenylyl)-L-threonyl-[protein] + diphosphate. It carries out the reaction L-tyrosyl-[protein] + ATP = O-(5'-adenylyl)-L-tyrosyl-[protein] + diphosphate. The enzyme catalyses L-histidyl-[protein] + UTP = N(tele)-(5'-uridylyl)-L-histidyl-[protein] + diphosphate. It catalyses the reaction L-seryl-[protein] + UTP = O-(5'-uridylyl)-L-seryl-[protein] + diphosphate. The catalysed reaction is L-tyrosyl-[protein] + UTP = O-(5'-uridylyl)-L-tyrosyl-[protein] + diphosphate. Nucleotidyltransferase involved in the post-translational modification of proteins. It can catalyze the addition of adenosine monophosphate (AMP) or uridine monophosphate (UMP) to a protein, resulting in modifications known as AMPylation and UMPylation. This is Protein nucleotidyltransferase YdiU from Rhodopseudomonas palustris (strain BisB5).